A 331-amino-acid chain; its full sequence is Probable allantoicase (331 aa).

This sequence belongs to the allantoicase family.

It carries out the reaction allantoate + H2O = (S)-ureidoglycolate + urea. It participates in nitrogen metabolism; (S)-allantoin degradation; (S)-ureidoglycolate from allantoate (aminidohydrolase route): step 1/1. The polypeptide is Probable allantoicase (Pseudomonas savastanoi pv. phaseolicola (strain 1448A / Race 6) (Pseudomonas syringae pv. phaseolicola (strain 1448A / Race 6))).